The primary structure comprises 557 residues: NAC domain-containing protein 17 (557 aa).

Residues 16-166 (SAPGFRFHPT…YYALYKLFKK (151 aa)) form the NAC domain. A DNA-binding region spans residues 115 to 172 (VGLKKTLVFYRGRAPSGERTDWVMHEYTMDEDELGRCKNPQEYYALYKLFKKSGAGPK). Residues 526 to 546 (FLLLSIVGALCAIFWVLVATV) form a helical membrane-spanning segment.

Expressed in roots, rosette leaves, cauline leaves, shoot apex, stems and flowers.

The protein resides in the endoplasmic reticulum membrane. It is found in the nucleus. Transcriptional activator activated by proteolytic cleavage through regulated intramembrane proteolysis (RIP). Transcriptional activator that acts as a positive regulator of AOX1A during mitochondrial dysfunction. Binds directly to AOX1A promoter. Mediates mitochondrial retrograde signaling. In Arabidopsis thaliana (Mouse-ear cress), this protein is NAC domain-containing protein 17.